Reading from the N-terminus, the 407-residue chain is ATP phosphoribosyltransferase regulatory subunit (407 aa).

This sequence belongs to the class-II aminoacyl-tRNA synthetase family. HisZ subfamily. As to quaternary structure, heteromultimer composed of HisG and HisZ subunits.

Its subcellular location is the cytoplasm. It functions in the pathway amino-acid biosynthesis; L-histidine biosynthesis; L-histidine from 5-phospho-alpha-D-ribose 1-diphosphate: step 1/9. Its function is as follows. Required for the first step of histidine biosynthesis. May allow the feedback regulation of ATP phosphoribosyltransferase activity by histidine. The chain is ATP phosphoribosyltransferase regulatory subunit from Rippkaea orientalis (strain PCC 8801 / RF-1) (Cyanothece sp. (strain PCC 8801)).